The chain runs to 603 residues: Penicillin-binding protein activator LpoA (603 aa).

A signal peptide spans Met-1–Ala-26. Cys-27 carries the N-palmitoyl cysteine lipid modification. Cys-27 carries the S-diacylglycerol cysteine lipid modification.

This sequence belongs to the LpoA family. In terms of assembly, interacts with PBP1a.

The protein resides in the cell outer membrane. Its function is as follows. Regulator of peptidoglycan synthesis that is essential for the function of penicillin-binding protein 1A (PBP1a). This is Penicillin-binding protein activator LpoA from Aliivibrio fischeri (strain ATCC 700601 / ES114) (Vibrio fischeri).